Consider the following 305-residue polypeptide: Dermonecrotic toxin LiSicTox-alphaII1 (305 aa).

A signal peptide spans 1 to 18; it reads MLLHIALILGCWSVFSEG. A propeptide spanning residues 19 to 26 is cleaved from the precursor; the sequence is AETDVAER. The active site involves H38. E58 and D60 together coordinate Mg(2+). Catalysis depends on H74, which acts as the Nucleophile. Cystine bridges form between C78–C84 and C80–C223. D118 provides a ligand contact to Mg(2+).

The protein belongs to the arthropod phospholipase D family. Class II subfamily. Class IIa sub-subfamily. Requires Mg(2+) as cofactor. Expressed by the venom gland.

The protein localises to the secreted. The enzyme catalyses an N-(acyl)-sphingosylphosphocholine = an N-(acyl)-sphingosyl-1,3-cyclic phosphate + choline. It carries out the reaction an N-(acyl)-sphingosylphosphoethanolamine = an N-(acyl)-sphingosyl-1,3-cyclic phosphate + ethanolamine. It catalyses the reaction a 1-acyl-sn-glycero-3-phosphocholine = a 1-acyl-sn-glycero-2,3-cyclic phosphate + choline. The catalysed reaction is a 1-acyl-sn-glycero-3-phosphoethanolamine = a 1-acyl-sn-glycero-2,3-cyclic phosphate + ethanolamine. Its function is as follows. Dermonecrotic toxins cleave the phosphodiester linkage between the phosphate and headgroup of certain phospholipids (sphingolipid and lysolipid substrates), forming an alcohol (often choline) and a cyclic phosphate. This toxin acts on sphingomyelin (SM) wih high activity. It may also act on ceramide phosphoethanolamine (CPE), lysophosphatidylcholine (LPC) and lysophosphatidylethanolamine (LPE), but not on lysophosphatidylserine (LPS), and lysophosphatidylglycerol (LPG). It acts by transphosphatidylation, releasing exclusively cyclic phosphate products as second products. Shows high hemolytic activity. Causes dermonecrosis, induces inflammatory response, platelet aggregation and increases vessel permeability. Shows no lethality when injected at higher dose into mice. May cause complement-dependent hemolysis as well as in a complement-independent manner. The hemolysis provoked in a complement-independent manner may be composed of several steps. The toxin may bind to erythrocyte membranes, may hydrolyze membrane phospholipids (SM and LPC) thus generating metabolism products that may cause hemolysis, probably by provoking an increase of calcium inside cells. The calcium influx may be due to the opening of L-type calcium channels, since L-type calcium channel blockers inhibit calcium influx. In Loxosceles intermedia (Brown spider), this protein is Dermonecrotic toxin LiSicTox-alphaII1.